Consider the following 171-residue polypeptide: Transcription elongation factor GreB (171 aa).

Residues 53–75 (KKRLREIDRRVRFLAKRLEVLKI) are a coiled coil.

Belongs to the GreA/GreB family. GreB subfamily.

Necessary for efficient RNA polymerase transcription elongation past template-encoded arresting sites. The arresting sites in DNA have the property of trapping a certain fraction of elongating RNA polymerases that pass through, resulting in locked ternary complexes. Cleavage of the nascent transcript by cleavage factors such as GreA or GreB allows the resumption of elongation from the new 3'terminus. GreB releases sequences of up to 9 nucleotides in length. The chain is Transcription elongation factor GreB from Yersinia pestis.